The following is a 188-amino-acid chain: Crossover junction endodeoxyribonuclease RuvC (188 aa).

Active-site residues include Asp7, Glu68, and Asp141. Residues Asp7, Glu68, and Asp141 each contribute to the Mg(2+) site.

It belongs to the RuvC family. Homodimer which binds Holliday junction (HJ) DNA. The HJ becomes 2-fold symmetrical on binding to RuvC with unstacked arms; it has a different conformation from HJ DNA in complex with RuvA. In the full resolvosome a probable DNA-RuvA(4)-RuvB(12)-RuvC(2) complex forms which resolves the HJ. Mg(2+) is required as a cofactor.

The protein localises to the cytoplasm. The enzyme catalyses Endonucleolytic cleavage at a junction such as a reciprocal single-stranded crossover between two homologous DNA duplexes (Holliday junction).. The RuvA-RuvB-RuvC complex processes Holliday junction (HJ) DNA during genetic recombination and DNA repair. Endonuclease that resolves HJ intermediates. Cleaves cruciform DNA by making single-stranded nicks across the HJ at symmetrical positions within the homologous arms, yielding a 5'-phosphate and a 3'-hydroxyl group; requires a central core of homology in the junction. The consensus cleavage sequence is 5'-(A/T)TT(C/G)-3'. Cleavage occurs on the 3'-side of the TT dinucleotide at the point of strand exchange. HJ branch migration catalyzed by RuvA-RuvB allows RuvC to scan DNA until it finds its consensus sequence, where it cleaves and resolves the cruciform DNA. The protein is Crossover junction endodeoxyribonuclease RuvC of Mycobacterium avium (strain 104).